Here is a 492-residue protein sequence, read N- to C-terminus: N-succinylglutamate 5-semialdehyde dehydrogenase (492 aa).

220-225 serves as a coordination point for NAD(+); sequence GSANTG. Catalysis depends on residues glutamate 243 and cysteine 277.

The protein belongs to the aldehyde dehydrogenase family. AstD subfamily.

The enzyme catalyses N-succinyl-L-glutamate 5-semialdehyde + NAD(+) + H2O = N-succinyl-L-glutamate + NADH + 2 H(+). Its pathway is amino-acid degradation; L-arginine degradation via AST pathway; L-glutamate and succinate from L-arginine: step 4/5. Catalyzes the NAD-dependent reduction of succinylglutamate semialdehyde into succinylglutamate. The sequence is that of N-succinylglutamate 5-semialdehyde dehydrogenase from Escherichia coli (strain ATCC 8739 / DSM 1576 / NBRC 3972 / NCIMB 8545 / WDCM 00012 / Crooks).